Consider the following 127-residue polypeptide: Small ribosomal subunit protein eS8 (127 aa).

It belongs to the eukaryotic ribosomal protein eS8 family. In terms of assembly, part of the 30S ribosomal subunit.

This Pyrococcus horikoshii (strain ATCC 700860 / DSM 12428 / JCM 9974 / NBRC 100139 / OT-3) protein is Small ribosomal subunit protein eS8 (rps8e).